Consider the following 147-residue polypeptide: Globin (147 aa).

One can recognise a Globin domain in the interval 1–147 (GLDGAQKTAL…LLTMLIKAHV (147 aa)). Positions 66 and 98 each coordinate heme b.

It belongs to the globin family. As to quaternary structure, homodimer.

It localises to the cytoplasm. The sequence is that of Globin from Busycotypus canaliculatus (Channeled whelk).